The sequence spans 364 residues: Aminomethyltransferase (364 aa).

It belongs to the GcvT family. The glycine cleavage system is composed of four proteins: P, T, L and H.

The enzyme catalyses N(6)-[(R)-S(8)-aminomethyldihydrolipoyl]-L-lysyl-[protein] + (6S)-5,6,7,8-tetrahydrofolate = N(6)-[(R)-dihydrolipoyl]-L-lysyl-[protein] + (6R)-5,10-methylene-5,6,7,8-tetrahydrofolate + NH4(+). In terms of biological role, the glycine cleavage system catalyzes the degradation of glycine. This is Aminomethyltransferase from Salmonella arizonae (strain ATCC BAA-731 / CDC346-86 / RSK2980).